Reading from the N-terminus, the 407-residue chain is Peptidase T (407 aa).

His81 serves as a coordination point for Zn(2+). The active site involves Asp83. Asp142 is a binding site for Zn(2+). The active-site Proton acceptor is the Glu176. Zn(2+) contacts are provided by Glu177, Asp199, and His381.

It belongs to the peptidase M20B family. Zn(2+) is required as a cofactor.

The protein resides in the cytoplasm. The enzyme catalyses Release of the N-terminal residue from a tripeptide.. Its function is as follows. Cleaves the N-terminal amino acid of tripeptides. In Streptococcus sanguinis (strain SK36), this protein is Peptidase T.